We begin with the raw amino-acid sequence, 1001 residues long: 26S proteasome non-ATPase regulatory subunit 1 homolog B (1001 aa).

Position 2 is an N-acetylalanine (Ala2). A Glycyl lysine isopeptide (Lys-Gly) (interchain with G-Cter in ubiquitin) cross-link involves residue Lys166. PC repeat units lie at residues 412–447 (SATAGLGVIHRGHLQQGRSLMAPYLPQGGAGGGGSP), 452–485 (GALYALGLIHANHGEGIKQFLRDSLRSTSVEVIQ), 487–521 (GACLGLGLAALGTADEDIYDDIKSVLYTDSAVAGE), 522–555 (AAGISMGLLLVGTATDKASEMLAYAHETQHEKII), 557–590 (GLALGIALTVYGREEGADTLIEQMTRDQDPIIRY), 591–626 (GGMYALALAYSGTANNKAIRQLLHFAVSDVSDDVRR), 627–659 (TAVLALGFVLYSDPEQTPRIVSLLSESYNPHVR), 661–695 (GAALAVGISCAGTGLSEAISLLEPLTSDVVDFVRQ), 696–736 (GALI…DTMS), and 739–771 (GAILASGILDAGGRNVTIRLLSKTKHDKVTAVI). Disordered stretches follow at residues 853 to 896 (AKKE…TVEK) and 954 to 1001 (SLTD…YASP). Basic and acidic residues predominate over residues 854 to 863 (KKEAEQKAKA). A Phosphoserine modification is found at Ser889. The span at 961-985 (STASPAVGAEAAGQAQQAATTSAMA) shows a compositional bias: low complexity.

This sequence belongs to the proteasome subunit S1 family. Component of the 19S regulatory particle (RP/PA700) base subcomplex of the 26S proteasome. The 26S proteasome is composed of a core protease (CP), known as the 20S proteasome, capped at one or both ends by the 19S regulatory particle (RP/PA700). The RP/PA700 complex is composed of at least 17 different subunits in two subcomplexes, the base and the lid, which form the portions proximal and distal to the 20S proteolytic core, respectively.

Functionally, acts as a regulatory subunit of the 26 proteasome which is involved in the ATP-dependent degradation of ubiquitinated proteins. The polypeptide is 26S proteasome non-ATPase regulatory subunit 1 homolog B (RPN2B) (Arabidopsis thaliana (Mouse-ear cress)).